Reading from the N-terminus, the 379-residue chain is Cytochrome b (379 aa).

4 helical membrane passes run 34 to 54, 78 to 99, 114 to 134, and 179 to 199; these read FGSL…LLAM, WLIR…YLHI, WNTG…GYVL, and FFAL…IHLT. The heme b site is built by histidine 84 and histidine 98. The heme b site is built by histidine 183 and histidine 197. A ubiquinone is bound at residue histidine 202. 4 consecutive transmembrane segments (helical) span residues 227–247, 289–309, 321–341, and 348–368; these read LKDI…AFFS, LGGV…PFLH, LSQM…WIGS, and FIII…ILFP.

Belongs to the cytochrome b family. In terms of assembly, the cytochrome bc1 complex contains 11 subunits: 3 respiratory subunits (MT-CYB, CYC1 and UQCRFS1), 2 core proteins (UQCRC1 and UQCRC2) and 6 low-molecular weight proteins (UQCRH/QCR6, UQCRB/QCR7, UQCRQ/QCR8, UQCR10/QCR9, UQCR11/QCR10 and a cleavage product of UQCRFS1). This cytochrome bc1 complex then forms a dimer. It depends on heme b as a cofactor.

The protein resides in the mitochondrion inner membrane. Functionally, component of the ubiquinol-cytochrome c reductase complex (complex III or cytochrome b-c1 complex) that is part of the mitochondrial respiratory chain. The b-c1 complex mediates electron transfer from ubiquinol to cytochrome c. Contributes to the generation of a proton gradient across the mitochondrial membrane that is then used for ATP synthesis. The chain is Cytochrome b (MT-CYB) from Dromaius novaehollandiae (Emu).